The sequence spans 245 residues: 5-oxoprolinase subunit A (245 aa).

This sequence belongs to the LamB/PxpA family. As to quaternary structure, forms a complex composed of PxpA, PxpB and PxpC.

The catalysed reaction is 5-oxo-L-proline + ATP + 2 H2O = L-glutamate + ADP + phosphate + H(+). In terms of biological role, catalyzes the cleavage of 5-oxoproline to form L-glutamate coupled to the hydrolysis of ATP to ADP and inorganic phosphate. This Cronobacter sakazakii (strain ATCC BAA-894) (Enterobacter sakazakii) protein is 5-oxoprolinase subunit A.